Here is a 230-residue protein sequence, read N- to C-terminus: Urease accessory protein UreF (230 aa).

Belongs to the UreF family. As to quaternary structure, ureD, UreF and UreG form a complex that acts as a GTP-hydrolysis-dependent molecular chaperone, activating the urease apoprotein by helping to assemble the nickel containing metallocenter of UreC. The UreE protein probably delivers the nickel.

It localises to the cytoplasm. Functionally, required for maturation of urease via the functional incorporation of the urease nickel metallocenter. The polypeptide is Urease accessory protein UreF (Polynucleobacter asymbioticus (strain DSM 18221 / CIP 109841 / QLW-P1DMWA-1) (Polynucleobacter necessarius subsp. asymbioticus)).